A 127-amino-acid polypeptide reads, in one-letter code: Photosystem II reaction center Psb28 protein (127 aa).

Residues 107–127 (GLGYSQNQNSDQTDGDANAEA) are disordered. Residues 109-118 (GYSQNQNSDQ) show a composition bias toward polar residues.

Belongs to the Psb28 family. In terms of assembly, part of the photosystem II complex.

It is found in the cellular thylakoid membrane. In Parasynechococcus marenigrum (strain WH8102), this protein is Photosystem II reaction center Psb28 protein.